A 295-amino-acid chain; its full sequence is MAITAQMVKELREKTGAGMMDCKKALTETNGDMEKAIDFLREKGIAKAAKKADRIAAEGLTFIETNGNEGLILELNSETDFVAKNEGFQALIKELAAHLLANKPANVEEAMAQTIEGGKTVEEHINEAIAKIGEKLTLRRFEIVSKTDADAFGAYLHMGGRIGVLTVLEGSTDEAAAKDVAMHIAAVNPKYIDRDAVTAEEVEHERQVLTQQALNEGKPEKIVAKMVEGRLGKFFEEICLLDQTFVKNPDMKVRQFVESKGGTLKGFVRYAVGEGIEKREDNFAEEVMNQVKGNN.

Residues Thr79–Val82 are involved in Mg(2+) ion dislocation from EF-Tu.

This sequence belongs to the EF-Ts family.

It localises to the cytoplasm. Functionally, associates with the EF-Tu.GDP complex and induces the exchange of GDP to GTP. It remains bound to the aminoacyl-tRNA.EF-Tu.GTP complex up to the GTP hydrolysis stage on the ribosome. The chain is Elongation factor Ts from Bacillus mycoides (strain KBAB4) (Bacillus weihenstephanensis).